Here is a 131-residue protein sequence, read N- to C-terminus: UPF0102 protein YraN (131 aa).

Over residues 1–19 (MATVPTRSGSPRQLTTKQT) the composition is skewed to polar residues. The disordered stretch occupies residues 1 to 20 (MATVPTRSGSPRQLTTKQTG).

This sequence belongs to the UPF0102 family.

The sequence is that of UPF0102 protein YraN from Escherichia coli (strain 55989 / EAEC).